Here is a 422-residue protein sequence, read N- to C-terminus: Carboxypeptidase B2 (422 aa).

Positions 1 to 21 (MKLHGLGILVAIILYEQHGFA) are cleaved as a signal peptide. A propeptide spans 22 to 113 (FQSGQVLSAL…QTFNDTVSPR (92 aa)) (activation peptide). Residues Asn43, Asn72, Asn84, and Asn107 are each glycosylated (N-linked (GlcNAc...) asparagine). The Peptidase M14 domain occupies 121–418 (QYHSLNEIYS…AAISKIVWHV (298 aa)). Cys177 and Cys190 form a disulfide bridge. 2 residues coordinate Zn(2+): His180 and Glu183. Substrate contacts are provided by residues 180–183 (HARE) and Arg238. The N-linked (GlcNAc...) asparagine glycan is linked to Asn240. 2 disulfide bridges follow: Cys249–Cys273 and Cys264–Cys278. A substrate-binding site is contributed by 255 to 256 (NR). His309 contacts Zn(2+). 310–311 (SY) is a binding site for substrate. Asn322 carries an N-linked (GlcNAc...) asparagine glycan. Tyr362 contributes to the substrate binding site. Residue Glu384 is the Proton donor/acceptor of the active site.

This sequence belongs to the peptidase M14 family. It depends on Zn(2+) as a cofactor. As to expression, plasma; synthesized in the liver.

The protein localises to the secreted. It catalyses the reaction Release of C-terminal Arg and Lys from a polypeptide.. With respect to regulation, TAFI/CPB2 is unique among carboxypeptidases in that it spontaneously inactivates with a short half-life, a property that is crucial for its role in controlling blood clot lysis. The zymogen is stabilized by interactions with the activation peptide. Release of the activation peptide increases a dynamic flap mobility and in time this leads to conformational changes that disrupt the catalytic site and expose a cryptic thrombin-cleavage site present at Arg-323. Its function is as follows. Cleaves C-terminal arginine or lysine residues from biologically active peptides such as kinins or anaphylatoxins in the circulation thereby regulating their activities. Down-regulates fibrinolysis by removing C-terminal lysine residues from fibrin that has already been partially degraded by plasmin. The chain is Carboxypeptidase B2 (Cpb2) from Mus musculus (Mouse).